Here is a 273-residue protein sequence, read N- to C-terminus: Homeobox protein ceh-43 (273 aa).

2 disordered regions span residues 47-79 and 153-204; these read NGAT…EEAF and RRSK…LVSS. Positions 102 to 161 form a DNA-binding region, homeobox; the sequence is MRKPRTIYNSSQLQMLQKKFQKTQYLALPDRAALAHELGLSQTQVKIWFQNRRSKQKKQK.

The protein belongs to the distal-less homeobox family. In terms of tissue distribution, predominantly expressed in the head hypdodermis, neuronal support cells and CAN neurons.

It is found in the nucleus. Its function is as follows. Probable transcription factor. Binds to the sequence motif 5'-ATAAT-3' in regulatory elements. Required for development of the anterior hypodermis during embryonic morphogenesis for cell adhesion; also affects embryonic and larval viability. Modulates and maintains dopaminergic neuron differentiation. May activate dopamine pathway genes in concert with ETS domain-containing protein ast-1, and homeobox proteins ceh-40 and ceh-20. This is Homeobox protein ceh-43 (ceh-43) from Caenorhabditis elegans.